Here is a 603-residue protein sequence, read N- to C-terminus: Bud site selection protein 8 (603 aa).

Residues 1–10 are compositionally biased toward acidic residues; the sequence is MIQSDEDNLD. 3 disordered regions span residues 1 to 25, 83 to 150, and 190 to 212; these read MIQS…GTSS, ASTS…SPSS, and ANRG…EPNE. Residues 1-515 are Extracellular-facing; the sequence is MIQSDEDNLD…GFRDVYSIEN (515 aa). Low complexity-rich tracts occupy residues 11-25 and 84-95; these read SSET…GTSS and STSSSSSSNSSS. N-linked (GlcNAc...) asparagine glycans are attached at residues N92, N110, N211, N240, N271, and N333. The span at 96-115 shows a compositional bias: polar residues; sequence ITQFHDTQDNNIPSNTTVRP. Residues 286–479 are disordered; that stretch reads AGSIKSSTSD…NRKEDRHDAE (194 aa). Residues 325–335 show a composition bias toward low complexity; that stretch reads PSHNSDSSNES. Basic and acidic residues predominate over residues 336 to 350; it reads SPKDHIGHNNEEKFS. N396 and N423 each carry an N-linked (GlcNAc...) asparagine glycan. Residues 439 to 452 show a composition bias toward polar residues; that stretch reads KSQSSESDTGQNSI. Residues 463–479 are compositionally biased toward basic and acidic residues; it reads KQQEKTDNRKEDRHDAE. The chain crosses the membrane as a helical span at residues 516-536; sequence IIVILLCCSIVPPLFFIIGCS. The Cytoplasmic segment spans residues 537-577; that stretch reads SRRKLVSDYRLMRLLMNKEHRAALLQGFIWDVDLRWFRMFC. Residues 578–598 form a helical membrane-spanning segment; sequence LILGAAETVIVMAGIAIGFGV. At 599-603 the chain is on the extracellular side; that stretch reads GITRE.

Belongs to the BUD8/9 family. In terms of assembly, interacts with RAX1 RAX2 at the proximal or distal pole in unbudded cells. Post-translationally, N- and O-glycosylated.

The protein localises to the cell membrane. The protein resides in the bud tip. Involved in positioning the distal bud pole signal. In Saccharomyces cerevisiae (strain ATCC 204508 / S288c) (Baker's yeast), this protein is Bud site selection protein 8.